Consider the following 613-residue polypeptide: Probable potassium transport system protein Kup (613 aa).

11 helical membrane passes run 38–58 (VLGVLSLLIWALLLIVTLKYL), 91–111 (WILVSLGLFGAALLYGDGMIT), 128–148 (PSFGPLVIPVTIAILAGLFLF), 159–179 (FFGPIILLWFTSIGLCGLVEI), 206–226 (FLVLGAVFLAVTGAEALYADM), 238–258 (WSLLVLPALLLNYFGQGAVLL), 270–290 (ALVPSWGIIPMVILATLATII), 328–348 (IYVPAANWALMFSTIALVAGF), 357–377 (AYGVAVTATMLISAVLFYYVA), 387–407 (GLNLLMGMFMLIDLSFFGASV), and 410–430 (LFHGAWFPLVIGFALFTLMLT).

Belongs to the HAK/KUP transporter (TC 2.A.72) family.

It localises to the cell inner membrane. The enzyme catalyses K(+)(in) + H(+)(in) = K(+)(out) + H(+)(out). Functionally, transport of potassium into the cell. Likely operates as a K(+):H(+) symporter. This Chlorobaculum tepidum (strain ATCC 49652 / DSM 12025 / NBRC 103806 / TLS) (Chlorobium tepidum) protein is Probable potassium transport system protein Kup.